The chain runs to 370 residues: Ganglioside-induced differentiation-associated protein 1-like 1 (370 aa).

In terms of domain architecture, GST N-terminal spans 45–129; that stretch reads ESLVLYHWTQ…YVERTFTGEH (85 aa). The 168-residue stretch at 177–344 folds into the GST C-terminal domain; it reads PKYATAEIRR…RLVKRKPPSF (168 aa).

Belongs to the GST superfamily.

The polypeptide is Ganglioside-induced differentiation-associated protein 1-like 1 (Gdap1l1) (Mus musculus (Mouse)).